We begin with the raw amino-acid sequence, 160 residues long: Protein-export protein SecB (160 aa).

It belongs to the SecB family. As to quaternary structure, homotetramer, a dimer of dimers. One homotetramer interacts with 1 SecA dimer.

The protein localises to the cytoplasm. In terms of biological role, one of the proteins required for the normal export of preproteins out of the cell cytoplasm. It is a molecular chaperone that binds to a subset of precursor proteins, maintaining them in a translocation-competent state. It also specifically binds to its receptor SecA. This chain is Protein-export protein SecB, found in Rhizobium etli (strain ATCC 51251 / DSM 11541 / JCM 21823 / NBRC 15573 / CFN 42).